The following is a 501-amino-acid chain: Capsid protein (501 aa).

The tract at residues 78-98 is disordered; that stretch reads SEEGFPVEPKTEEKDIPSTSG. The Nuclear localization signal motif lies at 122-125; the sequence is KRGF. Residues 431–448 form a CCHC-type zinc finger; sequence CKCWICHEEGHYANECPK.

The protein belongs to the caulimoviridae capsid protein family. Interacts (via nuclear localization signal) with host importin alpha.

It is found in the virion. The protein resides in the host nucleus. Its function is as follows. Self assembles to form an icosahedral capsid, about 50 nm in diameter, nm, composed of 420 subunits of the viral capsid protein. The capsid encapsulates the genomic dsDNA. Following virus entry into host cell, provides nuclear import of the viral genome. Virus particles do not enter the nucleus, but dock at the nuclear membrane through the interaction with host importins. In Cestrum parqui (CmYLCV), this protein is Capsid protein.